Consider the following 924-residue polypeptide: Ubiquitin carboxyl-terminal hydrolase 15 (924 aa).

Zn(2+) contacts are provided by Cys130, Cys133, Cys141, Cys144, Cys150, Cys154, His163, and Cys167. An MYND-type zinc finger spans residues 130-167; it reads CARCFGPAKTRCSRCKSVRYCSGKCQIIHWRVAHKDEC. Residues 226 to 236 are compositionally biased toward polar residues; the sequence is DITPQINTQGR. Disordered stretches follow at residues 226 to 301 and 317 to 366; these read DITP…VDSS and SHKH…TSKK. Residues 247–256 are compositionally biased toward basic and acidic residues; the sequence is ANRESCRRDS. Residues 331–362 are compositionally biased toward polar residues; that stretch reads GCPNTQYPSNGTRTATLPRTGINKSGEQSCTE. The USP domain maps to 438-744; the sequence is RGLVNCGNSC…GAYMLFYMRS (307 aa). The active-site Nucleophile is the Cys447. The active-site Proton acceptor is His703. The tract at residues 750–793 is disordered; that stretch reads RGEHNGKAPVHHSQPRNEMKEQRKPVNRFKPRADHKNTESSSSE. Positions 764-773 are enriched in basic and acidic residues; the sequence is PRNEMKEQRK.

Belongs to the peptidase C19 family. In terms of assembly, interacts with DA1. In terms of tissue distribution, highly expressed in rosette leaves and inflorescence. Expressed at low levels in cotyledons, stems, cauline leaves and siliques.

It localises to the cytoplasm. It is found in the nucleus. It carries out the reaction Thiol-dependent hydrolysis of ester, thioester, amide, peptide and isopeptide bonds formed by the C-terminal Gly of ubiquitin (a 76-residue protein attached to proteins as an intracellular targeting signal).. In terms of biological role, recognizes and hydrolyzes the peptide bond at the C-terminal Gly of ubiquitin. Involved in the processing of poly-ubiquitin precursors as well as that of ubiquitinated proteins. Involved in the regulation of organ size. Acts as a positive regulator of cell proliferation. Possesses deubiquitinating enzyme activity in vitro. The enzyme activity of UBP15 is required for its function in regulation of cell proliferation. Functions antagonistically in a common pathway with DA1 to regulate seed size. Acts maternally to regulate seed size by promoting cell proliferation in the integuments of ovules and developing seeds. Functions independently of DA2 and BB. The protein is Ubiquitin carboxyl-terminal hydrolase 15 of Arabidopsis thaliana (Mouse-ear cress).